Reading from the N-terminus, the 82-residue chain is MPKKTEQPVSFESSLNELEKIVTRLESGELPLDDALNEFEHGIQLARQGQQKLQQAEQRVQILLSDDPDAPLSPFTPDNDAL.

It belongs to the XseB family. As to quaternary structure, heterooligomer composed of large and small subunits.

It is found in the cytoplasm. The catalysed reaction is Exonucleolytic cleavage in either 5'- to 3'- or 3'- to 5'-direction to yield nucleoside 5'-phosphates.. Functionally, bidirectionally degrades single-stranded DNA into large acid-insoluble oligonucleotides, which are then degraded further into small acid-soluble oligonucleotides. This chain is Exodeoxyribonuclease 7 small subunit, found in Pectobacterium carotovorum subsp. carotovorum (strain PC1).